Consider the following 1474-residue polypeptide: SH3 and multiple ankyrin repeat domains protein 2 (1474 aa).

The span at 66 to 76 (LSPQLLQQTPS) shows a compositional bias: polar residues. Residues 66-125 (LSPQLLQQTPSKPDGATKSLGSYAPGPRSRSPSLNRLGGAGEDGKRPQPPHWHVGSPFTP) form a disordered region. Residues 148–207 (VPGRLFVAIKPYQPQVDGEIPLHRGDRVKVLSIGEGGFWEGSARGHIGWFPAECVEEVQC) enclose the SH3 domain. Gln162 is modified (phosphoserine). The PDZ domain maps to 248–342 (TVVLQKKDNE…HLVLKVVTVT (95 aa)). At Ser373 the chain carries Phosphoserine. The tract at residues 392–413 (RKKKDKPEEIVPASKPSRTAEN) is disordered. Residue Ser457 is modified to Phosphoserine. Position 486 is a phosphothreonine (Thr486). The segment at 504 to 534 (LSMPDTSEDIPPPPQSVPPSPPPPSPTTYNC) is disordered. The segment covering 513–529 (IPPPPQSVPPSPPPPSP) has biased composition (pro residues). Ser586 is subject to Phosphoserine. Disordered stretches follow at residues 659 to 920 (TIIV…ADDK), 947 to 995 (PVAG…PAAA), and 1057 to 1153 (PALA…ESMD). The segment covering 666–678 (STSSSGKSSQGSS) has biased composition (low complexity). Positions 711–722 (VRDREKRLEARR) are enriched in basic and acidic residues. A Phosphoserine modification is found at Ser724. The segment covering 783–795 (LGGGEAGAQGEAG) has biased composition (gly residues). Low complexity-rich tracts occupy residues 811–823 (PAAA…PASP) and 833–846 (RLLD…LALS). Composition is skewed to basic and acidic residues over residues 847-868 (ARDR…KADL) and 899-920 (RRQE…ADDK). Thr903 bears the Phosphothreonine mark. A compositionally biased stretch (polar residues) spans 1075 to 1085 (SLNSSQPANST). Residues 1119–1130 (VDSRSSSDHHLE) are compositionally biased toward basic and acidic residues. A compositionally biased stretch (low complexity) spans 1131–1151 (TTSTISTVSSISTLSSEGGES). The SH3-binding signature appears at 1169–1175 (PPVPPKP). 2 disordered regions span residues 1195–1216 (EDTD…SAQA) and 1260–1401 (NRGK…ISNK). Residues 1202-1212 (IPPPAPPPPPG) are compositionally biased toward pro residues. The span at 1291 to 1305 (STVSGTRSTTVTFTV) shows a compositional bias: low complexity. Residue Thr1292 is glycosylated (O-linked (GlcNAc) threonine). Over residues 1307–1317 (PGTSQPITLQS) the composition is skewed to polar residues. Phosphoserine occurs at positions 1334 and 1338. 2 stretches are compositionally biased toward low complexity: residues 1352–1363 (SAAAASPSPTLS) and 1385–1399 (RSRS…QPIS). The region spanning 1411-1474 (WTKPDVADWL…ERALKQLLDR (64 aa)) is the SAM domain.

It belongs to the SHANK family. Is part of a complex with DLG4/PSD-95 and DLGAP1/GKAP. Interacts with CTTN/cortactin SH3 domain, DLGAP1/GKAP and alpha-latrotoxin receptor 1. Interacts with DNM2, DBNL, GRID2, BAIAP2, SLC9A3, PLCB3 and CFTR. Interacts with ABI1 (via SH3 domain). Interacts (via proline-rich region) with PDE4D isoform 5 (via N-terminal region). Interacts with PDE4D isoform 33, isoform 4, isoform 7, isoform 8 and isoform 9 but not isoform 32 and isoform 6. Interacts weakly with PDE4D isoform 31. Interacts with ABI1. In terms of tissue distribution, expressed in epithelial cells (at protein level). All isoforms except isoform 7 are expressed predominantly in brain, with highest levels in olfactory bulb, cerebral cortex, cerebellum, central gray matter and hippocampus. Moderate levels of expression are seen in the caudate putamen, thalamic nuclei and brain stem. In cerebellum primarily expressed in Purkinje cells. Isoform 7 is not expressed in brain but expressed in liver, cholangiocytes and thymus. Isoform 7 is present in pancreas, colonic mucosa and thymocytes (at protein level).

Its subcellular location is the apical cell membrane. The protein localises to the cytoplasm. It is found in the synapse. The protein resides in the postsynaptic density. It localises to the cell projection. Its subcellular location is the growth cone. The protein localises to the dendritic spine. Seems to be an adapter protein in the postsynaptic density (PSD) of excitatory synapses that interconnects receptors of the postsynaptic membrane including NMDA-type and metabotropic glutamate receptors, and the actin-based cytoskeleton. May play a role in the structural and functional organization of the dendritic spine and synaptic junction. The protein is SH3 and multiple ankyrin repeat domains protein 2 (Shank2) of Rattus norvegicus (Rat).